The chain runs to 185 residues: Transmembrane protein 140 (185 aa).

The Cytoplasmic portion of the chain corresponds to 1–11 (MAGPRPRWRDQ). A helical transmembrane segment spans residues 12-32 (LLFMSIIVLVIVVICLMFYAL). The Extracellular segment spans residues 33 to 77 (LWEAGNLTDLPNLRIGFYNFCLWNEDTSTLQCHQFPELEALGVPR). An N-linked (GlcNAc...) asparagine glycan is attached at Asn-38. The helical transmembrane segment at 78-98 (VGLGLARLGVYGSLVLTLFAP) threads the bilayer. Residues 99 to 114 (QPLLLAQCNSDERAWR) lie on the Cytoplasmic side of the membrane. The chain crosses the membrane as a helical span at residues 115–135 (LAVGFLAVSSVLLAGGLGLFL). The Extracellular portion of the chain corresponds to 136–150 (SYVWKWVRLSLPGPG). The helical transmembrane segment at 151–171 (FLALGSAQALLILLLIAMAVF) threads the bilayer. Topologically, residues 172–185 (PLRAERAESKLESC) are cytoplasmic.

In terms of tissue distribution, expression significantly higher in gliomas than in normal brain tissues.

It localises to the membrane. The sequence is that of Transmembrane protein 140 (TMEM140) from Homo sapiens (Human).